Consider the following 351-residue polypeptide: Anthranilate phosphoribosyltransferase (351 aa).

Residues G80, 83 to 84 (GD), T88, 90 to 93 (NIST), 108 to 116 (KHGNRSVTS), and S120 each bind 5-phospho-alpha-D-ribose 1-diphosphate. G80 contacts anthranilate. S92 contributes to the Mg(2+) binding site. N111 is an anthranilate binding site. Anthranilate is bound at residue R166. D229 and E230 together coordinate Mg(2+).

The protein belongs to the anthranilate phosphoribosyltransferase family. As to quaternary structure, homodimer. Mg(2+) serves as cofactor.

The catalysed reaction is N-(5-phospho-beta-D-ribosyl)anthranilate + diphosphate = 5-phospho-alpha-D-ribose 1-diphosphate + anthranilate. The protein operates within amino-acid biosynthesis; L-tryptophan biosynthesis; L-tryptophan from chorismate: step 2/5. Functionally, catalyzes the transfer of the phosphoribosyl group of 5-phosphorylribose-1-pyrophosphate (PRPP) to anthranilate to yield N-(5'-phosphoribosyl)-anthranilate (PRA). This Chlorobium limicola (strain DSM 245 / NBRC 103803 / 6330) protein is Anthranilate phosphoribosyltransferase.